We begin with the raw amino-acid sequence, 940 residues long: Inter-alpha-trypsin inhibitor heavy chain H5 (940 aa).

An N-terminal signal peptide occupies residues 1-16; the sequence is MLPLLGLCFALPLCAG. The 127-residue stretch at 35 to 161 folds into the VIT domain; that stretch reads IPRQVRLLQR…KAAFLLSYEE (127 aa). N-linked (GlcNAc...) asparagine glycosylation is found at Asn-97 and Asn-127. The tract at residues 207–227 is disordered; that stretch reads NSRQRGSGRGPDDSGPPPSTV. Asn-231, Asn-421, Asn-508, Asn-694, Asn-778, and Asn-795 each carry an N-linked (GlcNAc...) asparagine glycan. Positions 295–478 constitute a VWFA domain; that stretch reads NVVFVLDSSA…AQLIGFYDEI (184 aa).

It belongs to the ITIH family.

It localises to the secreted. In terms of biological role, may act as a tumor suppressor. The polypeptide is Inter-alpha-trypsin inhibitor heavy chain H5 (ITIH5) (Bos taurus (Bovine)).